The chain runs to 495 residues: UDP-N-acetylmuramoyl-L-alanyl-D-glutamate--2,6-diaminopimelate ligase (495 aa).

Residues Leu32 and Ser34 each coordinate UDP-N-acetyl-alpha-D-muramoyl-L-alanyl-D-glutamate. Position 119–125 (119–125 (GTNGKTT)) interacts with ATP. Residues Asn160, 161–162 (TT), Ser188, Gln194, and Arg196 each bind UDP-N-acetyl-alpha-D-muramoyl-L-alanyl-D-glutamate. Lys228 carries the post-translational modification N6-carboxylysine. Meso-2,6-diaminopimelate contacts are provided by residues Arg390, 414-417 (DNPR), Gly465, and Glu469. The Meso-diaminopimelate recognition motif motif lies at 414–417 (DNPR).

Belongs to the MurCDEF family. MurE subfamily. The cofactor is Mg(2+). In terms of processing, carboxylation is probably crucial for Mg(2+) binding and, consequently, for the gamma-phosphate positioning of ATP.

It localises to the cytoplasm. The catalysed reaction is UDP-N-acetyl-alpha-D-muramoyl-L-alanyl-D-glutamate + meso-2,6-diaminopimelate + ATP = UDP-N-acetyl-alpha-D-muramoyl-L-alanyl-gamma-D-glutamyl-meso-2,6-diaminopimelate + ADP + phosphate + H(+). It functions in the pathway cell wall biogenesis; peptidoglycan biosynthesis. In terms of biological role, catalyzes the addition of meso-diaminopimelic acid to the nucleotide precursor UDP-N-acetylmuramoyl-L-alanyl-D-glutamate (UMAG) in the biosynthesis of bacterial cell-wall peptidoglycan. The sequence is that of UDP-N-acetylmuramoyl-L-alanyl-D-glutamate--2,6-diaminopimelate ligase from Vibrio cholerae serotype O1 (strain ATCC 39315 / El Tor Inaba N16961).